Reading from the N-terminus, the 432-residue chain is uncharacterized protein (432 aa).

Disordered regions lie at residues 37–61, 127–151, and 298–378; these read DGIG…SADC, RDHD…DTRY, and SVSS…NHQC. Positions 312 to 335 are enriched in polar residues; that stretch reads DSSTLANTQGFREDQSQQQHTPSP. Positions 341–366 are enriched in low complexity; that stretch reads SSLSHQFHQSIHQSHQHHQSIYQSQH.

This is an uncharacterized protein from Arabidopsis thaliana (Mouse-ear cress).